Here is a 160-residue protein sequence, read N- to C-terminus: Cytochrome b6-f complex subunit 4 (160 aa).

A run of 3 helical transmembrane segments spans residues 36-56 (LLYIFPVVILGTIACTVGLAV), 95-115 (LLGVLLMAAVPAGLLTVPFLE), and 131-151 (TVFLIGTVVSIWLGIGAALPI).

Belongs to the cytochrome b family. PetD subfamily. As to quaternary structure, the 4 large subunits of the cytochrome b6-f complex are cytochrome b6, subunit IV (17 kDa polypeptide, petD), cytochrome f and the Rieske protein, while the 4 small subunits are petG, petL, petM and petN. The complex functions as a dimer.

Its subcellular location is the plastid. The protein localises to the chloroplast thylakoid membrane. Component of the cytochrome b6-f complex, which mediates electron transfer between photosystem II (PSII) and photosystem I (PSI), cyclic electron flow around PSI, and state transitions. The polypeptide is Cytochrome b6-f complex subunit 4 (Physcomitrium patens (Spreading-leaved earth moss)).